A 2364-amino-acid polypeptide reads, in one-letter code: Cytotoxin-L (2364 aa).

The interval 1–91 (MNLVNKAQLQ…EVLELKNNSL (91 aa)) is four-helical bundle. In terms of domain architecture, GT44 spans 96-468 (KNLHFIWIGG…APDVRSTINL (373 aa)). Residues 96-468 (KNLHFIWIGG…APDVRSTINL (373 aa)) form a glucosyltransferase region region. UDP-alpha-D-glucose-binding positions include 101–103 (IWI), asparagine 139, 265–270 (LAAASD), and 286–288 (DVD). The Mg(2+) site is built by aspartate 288, glutamate 515, and serine 518. 518–520 (SLW) is a UDP-alpha-D-glucose binding site. The interval 544–799 (GEDDNLDFAQ…KSKYLHELST (256 aa)) is autoprocessing region. Zn(2+)-binding residues include glutamate 545 and aspartate 546. The Peptidase C80 domain maps to 567 to 774 (LSSMKTRNKE…EESIIKDISS (208 aa)). Residues tyrosine 577, lysine 600, and lysine 647 each coordinate 1D-myo-inositol hexakisphosphate. Histidine 653 contacts Zn(2+). Catalysis depends on histidine 653, which acts as the For protease activity. Cysteine 698 functions as the Nucleophile; for protease activity in the catalytic mechanism. Histidine 757 is a binding site for Zn(2+). 3 residues coordinate 1D-myo-inositol hexakisphosphate: lysine 764, lysine 775, and lysine 792. The tract at residues 800 to 1500 (LLQEIRNNAN…ESIIRNIYMP (701 aa)) is translocation region. 5 interaction with host SEMA6A and SEMA6B regions span residues 1433 to 1438 (CMKLIE), 1466 to 1471 (DNETKY), 1484 to 1495 (FTAEFSNESIIR), 1504 to 1511 (NLFIYSSK), and 1596 to 1601 (YNNLDP). 20 Cell wall-binding repeats span residues 1813–1832 (EFGLVSLDNDYFYINSFGNM), 1833–1852 (VSGLIYINDSLYYFKPPKNN), 1854–1873 (ITGFTTIDGNKYYFDPTKSG), 1876–1895 (SIGEITIDGKDYYFNKQGIL), 1926–1945 (FIGKLNIDGKIYYFEDNYRA), 1946–1965 (AVEWKLLDDETYYFNPKTGE), 1967–1986 (LKGLHQIGDNKYYFDDNGIM), 1987–2006 (QTGFITINDKVFYFNNDGVM), 2007–2026 (QVGYIEVNGKYFYFGKNGER), 2057–2076 (YNGILNFNGKIYFFDISNTA), 2077–2097 (VVGWGTLDDGSTYYFDDNTAE), 2099–2118 (CIGLTVINDCKYYFDDNGIR), 2119–2138 (QLGFITINDNIFYFSESGKI), 2139–2158 (ELGYQNINGNYFYIDESGLV), 2209–2224 (ETGWIENETDKYYFDP), 2227–2249 (KKAYKGINVVDDIKYYFDENGIM), 2250–2269 (RTGLISFENNNYYFNEDGKM), 2270–2289 (QFGYLNIKDKMFYFGKDGKM), 2320–2339 (YTGWLDLDGKRYYFTDEYIA), and 2340–2359 (ATGSLTIDGYNYYFDPDTAE). The interval 1835-2364 (GLIYINDSLY…PDTAELVVSE (530 aa)) is receptor-binding (CROPS) region.

The protein belongs to the clostridial glucosylating toxin (LCGT) family. Homomultimer; forms an inactive homomultimer at pH 8, which dissociates at pH 4, leading to cytotoxicity. Interacts with host SEMA6A; interaction promotes toxin entry into host cell. Interacts with host SEMA6B; interaction promotes toxin entry into host cell. It depends on Zn(2+) as a cofactor. Requires Mn(2+) as cofactor. Mg(2+) serves as cofactor. Undergoes autocatalytic cleavage to release the N-terminal part (Glucosyltransferase TcsL), which constitutes the active part of the toxin, in the host cytosol. 1D-myo-inositol hexakisphosphate-binding (InsP6) activates the peptidase C80 domain and promotes autoprocessing.

The protein localises to the secreted. The protein resides in the host endosome membrane. Its subcellular location is the host cytoplasm. It is found in the host cytosol. It localises to the host cell membrane. The catalysed reaction is L-threonyl-[protein] + UDP-alpha-D-glucose = 3-O-(alpha-D-glucosyl)-L-threonyl-[protein] + UDP + H(+). Protease activity is activated upon binding to 1D-myo-inositol hexakisphosphate (InsP6), which induces conformational reorganization. Precursor of a cytotoxin that targets the vascular endothelium, inducing an anti-inflammatory effect and resulting in lethal toxic shock syndrome. TcsL constitutes the main toxin that mediates the pathology of P.sordellii infection, an anaerobic Gram-positive bacterium found in soil and in the gastrointestinal and vaginal tracts of animals and humans; although the majority of carriers are asymptomatic, pathogenic P.sordellii infections arise rapidly and are highly lethal. This form constitutes the precursor of the toxin: it enters into host cells and mediates autoprocessing to release the active toxin (Glucosyltransferase TcsL) into the host cytosol. Targets vascular endothelium by binding to the semaphorin proteins SEMA6A and SEMA6B, and enters host cells via clathrin-mediated endocytosis. Once entered into host cells, acidification in the endosome promotes the membrane insertion of the translocation region and formation of a pore, leading to translocation of the GT44 and peptidase C80 domains across the endosomal membrane. This activates the peptidase C80 domain and autocatalytic processing, releasing the N-terminal part (Glucosyltransferase TcsL), which constitutes the active part of the toxin, in the cytosol. Its function is as follows. Active form of the toxin, which is released into the host cytosol following autoprocessing and inactivates small GTPases. Acts by mediating monoglucosylation of small GTPases of the Ras (H-Ras/HRAS, K-Ras/KRAS and N-Ras/NRAS) family in host cells at the conserved threonine residue located in the switch I region ('Thr-37/35'), using UDP-alpha-D-glucose as the sugar donor. Also able to catalyze monoglucosylation of some members of the Rho family (Rac1 and Rap2A), but with less efficiency than with Ras proteins. Monoglucosylation of host small GTPases completely prevents the recognition of the downstream effector, blocking the GTPases in their inactive form and leading to apoptosis. Induces an anti-inflammatory effect, mainly by inactivating Ras proteins which results in blockage of the cell cycle and killing of immune cells. The absence or moderate local inflammatory response allows C.sordellii spreading in deep tissues, production of toxin which is released in the general circulation and causes a toxic shock syndrome. The sequence is that of Cytotoxin-L from Paraclostridium sordellii (strain ATCC 9714 / DSM 2141 / JCM 3814 / LMG 15708 / NCIMB 10717 / 211) (Clostridium sordellii).